A 264-amino-acid polypeptide reads, in one-letter code: 3-dehydroquinate dehydratase (264 aa).

3-dehydroquinate is bound by residues 50-52 and Arg86; that span reads EWR. The active-site Proton donor/acceptor is the His148. The Schiff-base intermediate with substrate role is filled by Lys175. The 3-dehydroquinate site is built by Arg217, Ser236, and Gln240.

This sequence belongs to the type-I 3-dehydroquinase family. Homodimer.

The enzyme catalyses 3-dehydroquinate = 3-dehydroshikimate + H2O. It participates in metabolic intermediate biosynthesis; chorismate biosynthesis; chorismate from D-erythrose 4-phosphate and phosphoenolpyruvate: step 3/7. Functionally, involved in the third step of the chorismate pathway, which leads to the biosynthesis of aromatic amino acids. Catalyzes the cis-dehydration of 3-dehydroquinate (DHQ) and introduces the first double bond of the aromatic ring to yield 3-dehydroshikimate. This Albidiferax ferrireducens (strain ATCC BAA-621 / DSM 15236 / T118) (Rhodoferax ferrireducens) protein is 3-dehydroquinate dehydratase.